The following is a 263-amino-acid chain: Adaptin ear-binding coat-associated protein 2 (263 aa).

Disordered stretches follow at residues 166–194 (KKKE…PPGG) and 219–263 (APSS…WVQF). Residue S181 is modified to Phosphoserine. 2 short sequence motifs (WXXF motif) span residues 240–243 (WGDF) and 260–263 (WVQF). Residues 246–263 (STGSTSSQTQPGTGWVQF) show a composition bias toward low complexity.

The protein belongs to the NECAP family. Interacts with AP1G1 and AP2A1 components of the adapter protein complexes AP-1 and AP-2. Interacts with the GAE domain proteins GGA1, GGA2 and GGA3.

The protein localises to the cytoplasmic vesicle. The protein resides in the clathrin-coated vesicle membrane. It is found in the cell membrane. In terms of biological role, involved in endocytosis. The polypeptide is Adaptin ear-binding coat-associated protein 2 (NECAP2) (Homo sapiens (Human)).